Consider the following 361-residue polypeptide: dTDP-glucose 4,6-dehydratase 1 (361 aa).

NAD(+) contacts are provided by residues Phe11–Ile12, Asp32–Thr35, Asp58–Ile59, Leu80–Ser84, and Thr99. Residue Ser84 participates in substrate binding. Thr133 provides a ligand contact to substrate. The active-site Proton donor is Asp134. Catalysis depends on proton acceptor residues Glu135 and Tyr167. Tyr167 to Lys171 contacts NAD(+). Asn196 is a binding site for substrate. Position 197 (Asn197) interacts with NAD(+). Substrate contacts are provided by residues Lys206 to Leu207, Pro222 to Tyr224, Arg231, Asn266, and Asp296 to His300.

Belongs to the NAD(P)-dependent epimerase/dehydratase family. dTDP-glucose dehydratase subfamily. In terms of assembly, homodimer. It depends on NAD(+) as a cofactor.

The catalysed reaction is dTDP-alpha-D-glucose = dTDP-4-dehydro-6-deoxy-alpha-D-glucose + H2O. It participates in carbohydrate biosynthesis; dTDP-L-rhamnose biosynthesis. The protein operates within bacterial outer membrane biogenesis; LPS O-antigen biosynthesis. In terms of biological role, catalyzes the dehydration of dTDP-D-glucose to form dTDP-6-deoxy-D-xylo-4-hexulose via a three-step process involving oxidation, dehydration and reduction. The sequence is that of dTDP-glucose 4,6-dehydratase 1 (rfbB) from Escherichia coli (strain K12).